The primary structure comprises 479 residues: Glycine betaine methyltransferase (479 aa).

Belongs to the trimethylamine methyltransferase family.

The enzyme catalyses Co(I)-[glycine betaine-specific corrinoid protein] + glycine betaine + H(+) = methyl-Co(III)-[glycine betaine-specific corrinoid protein] + N,N-dimethylglycine. Methyltransferase able to methylate free cob(I)alamin in vitro, using glycine betaine as the methyl donor, yealding methylcobalamin (methylCbl) and dimethylglycine. In vivo, probably carries out the methylation of a corrinoid protein, likely the adjacently encoded DSY3155, with glycine betaine, to then supply methyl groups to tetrahydrofolate (THF) for ultimate conversion to carbon dioxide; oxidation of the methyl group would also provide reducing equivalents for anaerobic respiration. Thus, may function in the pathway that allows anaerobic methylotrophic growth of D.hafniense using glycine betaine. Cannot use quaternary amines such as carnitine and choline as substrates, nor tertiary amines such as dimethylglycine or trimethylamine. In Desulfitobacterium hafniense (strain Y51), this protein is Glycine betaine methyltransferase.